We begin with the raw amino-acid sequence, 414 residues long: MVGTKRVADSIDTNSDDTLTRNREVEVEAMLSRRKQLRTTTTRTTTTRTTPLSLSSSASKMNWSKNDELVILGGIVDYENETKLSYRSDWDALYRYIKDCVEAKFSKIQLINKVKNMKRKFTYNQGRSNHGEQLSFTNTDDDEIFKLSLIIWDKNESEYVSNENIDQAKDVPSGEPETNDVPCEEQDDRDVPCEEQERANIEIDNGVREKLDQAKDVPCVEQESEDVPCVEQERVSIEIDNGEKEKLDQTMDCEEQENTDVLCEEKGDKDVPCEEQENKDVPCEEQERVSIEIDNGEEEMSSEEDGVDEVGVMEDTLDSGISFQGLGKNGVKDKSEEDDVVELGVLQEIFKEDTFFQSLGRYQQKLLLQNLENVGVERRKELINEWKALFVDEQRLCVKKLTFAAKLANLGVSP.

Disordered regions lie at residues 36 to 57 and 167 to 191; these read QLRT…LSSS and QAKD…DRDV. Residues 38–50 show a composition bias toward low complexity; it reads RTTTTRTTTTRTT. The interval 382 to 403 is non-canonical leucine-zipper; it reads LINEWKALFVDEQRLCVKKLTF.

The protein belongs to the GeBP family. In terms of assembly, homo- and heterodimers. Interacts with GEBP, GPL1 and GPL2. Interacts with GEBP. As to expression, expressed in the apical meristem and young leaf primordia. Detected in the vascular tissues of rosette leaves, in primary and secondary roots and at the base of flowers and siliques.

It is found in the nucleus. In terms of biological role, probable transcription factor. Involved in stress responses. Plays a repressive role in cell expansion by counteracting the positive role of CPR5 in this process, but does not regulate cell proliferation or endoreduplication. This Arabidopsis thaliana (Mouse-ear cress) protein is GLABROUS1 enhancer-binding protein-like 3.